The primary structure comprises 320 residues: Adhesin MafA 1 (320 aa).

The N-terminal stretch at 1–18 is a signal peptide; that stretch reads MQARLLIPILFSVFILSA. Cys19 carries the N-palmitoyl cysteine lipid modification. Cys19 carries the S-diacylglycerol cysteine lipid modification. A disordered region spans residues 288–320; it reads HMGNSAPSVEADNSHEGYGYSDEAVRRHRQGQP.

This sequence belongs to the MafA family.

The protein resides in the cell outer membrane. The chain is Adhesin MafA 1 (mafA1) from Neisseria meningitidis serogroup A / serotype 4A (strain DSM 15465 / Z2491).